The sequence spans 235 residues: Protein mxl-3 (235 aa).

The disordered stretch occupies residues 18 to 49 (EKQFRKRHHSDSSDDDSSSPKSASPSMDDDRR). The interval 47–60 (DRRAHHNELERRRR) is basic motif. In terms of domain architecture, bHLH spans 47–98 (DRRAHHNELERRRRDHIKDHFTILKDAIPLLDGEKSSRALILKRAVEFIHVM). The tract at residues 61-98 (DHIKDHFTILKDAIPLLDGEKSSRALILKRAVEFIHVM) is helix-loop-helix motif.

It belongs to the MAX family. May form homodimer. Interacts (via N-terminus) with skn-1 isoforms a and c. In terms of tissue distribution, expressed in the intestine and in the AWC sensory neurons.

It is found in the nucleus. The protein resides in the cytoplasm. In terms of biological role, transcription factor which regulates the expression of genes involved in lipid metabolism in response to nutrient availability. Binds to the E-box motif 5'-CACGTG-3'. Under well-fed conditions, binds to the promoter and represses the expression of lipase genes lipl-1, lipl-2, lipl-3 and to a lesser extent lipl-5, thereby preventing lipolysis. In response to a high-glucose diet, promotes fatty acid synthesis, elongation and desaturation by up-regulating transcription factor sbp-1 expression. Under well-fed conditions, acts remotely in the intestine to up-regulate the expression of chemoreceptor srh-234 gene in the ADL sensory neuron, possibly by regulating the insulin signaling pathway. The sequence is that of Protein mxl-3 from Caenorhabditis elegans.